The following is a 502-amino-acid chain: UDP-N-acetylmuramoylalanine--D-glutamate ligase (502 aa).

An ATP-binding site is contributed by 129–135 (GTNGKTT). The interval 288 to 307 (APDETTSRRRKRDGAHTPDI) is disordered.

This sequence belongs to the MurCDEF family.

The protein localises to the cytoplasm. It carries out the reaction UDP-N-acetyl-alpha-D-muramoyl-L-alanine + D-glutamate + ATP = UDP-N-acetyl-alpha-D-muramoyl-L-alanyl-D-glutamate + ADP + phosphate + H(+). Its pathway is cell wall biogenesis; peptidoglycan biosynthesis. Functionally, cell wall formation. Catalyzes the addition of glutamate to the nucleotide precursor UDP-N-acetylmuramoyl-L-alanine (UMA). The protein is UDP-N-acetylmuramoylalanine--D-glutamate ligase of Burkholderia ambifaria (strain ATCC BAA-244 / DSM 16087 / CCUG 44356 / LMG 19182 / AMMD) (Burkholderia cepacia (strain AMMD)).